The following is a 138-amino-acid chain: Transcription antitermination protein NusB (138 aa).

This sequence belongs to the NusB family.

Functionally, involved in transcription antitermination. Required for transcription of ribosomal RNA (rRNA) genes. Binds specifically to the boxA antiterminator sequence of the ribosomal RNA (rrn) operons. The sequence is that of Transcription antitermination protein NusB from Tolumonas auensis (strain DSM 9187 / NBRC 110442 / TA 4).